We begin with the raw amino-acid sequence, 246 residues long: Small ribosomal subunit protein uS2 (246 aa).

This sequence belongs to the universal ribosomal protein uS2 family.

This chain is Small ribosomal subunit protein uS2, found in Exiguobacterium sp. (strain ATCC BAA-1283 / AT1b).